A 1041-amino-acid polypeptide reads, in one-letter code: RAS protein activator like-3 (1041 aa).

Residues 1 to 59 (MKPECGQTMFRTFWSRSRDSSAMDPPLQSEEDSQTQPSLPSPLTSYRWHTGGSGEKAAG) form a disordered region. Residues 34 to 44 (QTQPSLPSPLT) show a composition bias toward polar residues. S41, S74, S187, S189, S190, S193, S239, S252, S256, and S259 each carry phosphoserine. The stretch at 218–243 (SNQVHNVRKLLKRLKEKKRAKSELGA) forms a coiled coil. The PH domain occupies 220–321 (QVHNVRKLLK…WIEDLRRQFQ (102 aa)). The segment at 234 to 256 (KKRAKSELGAYTPRDGPPSALGS) is disordered. T262 carries the phosphothreonine modification. In terms of domain architecture, C2 spans 312 to 430 (WIEDLRRQFQ…APAAGLERWF (119 aa)). In terms of domain architecture, Ras-GAP spans 500 to 708 (GRAQALVTDL…PAMQHFLDQV (209 aa)). The segment at 790 to 910 (GEKPGFLAPR…PGDRYQTTGT (121 aa)) is disordered. Phosphoserine is present on residues S813 and S816. A compositionally biased stretch (basic residues) spans 850–866 (RPTHRRPSAGSKPRPKG). Residues 931–1013 (QKALSLLVES…LRDSLQSLQL (83 aa)) adopt a coiled-coil conformation. The interval 1016 to 1041 (KTPGSRSQPLPLKAPCVNGADLSMGT) is disordered.

As to expression, predominantly expressed in hematopoietic tissues.

The protein resides in the cytoplasm. Its subcellular location is the cell cortex. Functions as a Ras GTPase-activating protein. Plays an important role in the expansion and functions of natural killer T (NKT) cells in the liver by negatively regulating RAS activity and the down-stream ERK signaling pathway. The protein is RAS protein activator like-3 (Rasal3) of Mus musculus (Mouse).